Reading from the N-terminus, the 224-residue chain is Ribonuclease 3 (224 aa).

The RNase III domain maps to 5 to 127; the sequence is LERLCRRLNY…ILAAIYLDGG (123 aa). Glu-40 contacts Mg(2+). Residue Asp-44 is part of the active site. Mg(2+) contacts are provided by Asp-113 and Glu-116. The active site involves Glu-116. A DRBM domain is found at 154 to 224; that stretch reads DAKTQLQEFL…AKAMLEQLQG (71 aa).

The protein belongs to the ribonuclease III family. In terms of assembly, homodimer. Requires Mg(2+) as cofactor.

It is found in the cytoplasm. It catalyses the reaction Endonucleolytic cleavage to 5'-phosphomonoester.. In terms of biological role, digests double-stranded RNA. Involved in the processing of primary rRNA transcript to yield the immediate precursors to the large and small rRNAs (23S and 16S). Processes some mRNAs, and tRNAs when they are encoded in the rRNA operon. Processes pre-crRNA and tracrRNA of type II CRISPR loci if present in the organism. The protein is Ribonuclease 3 of Legionella pneumophila subsp. pneumophila (strain Philadelphia 1 / ATCC 33152 / DSM 7513).